The primary structure comprises 150 residues: Nucleoside diphosphate kinase (150 aa).

ATP-binding residues include K9, F57, R85, T91, R102, and N112. H115 acts as the Pros-phosphohistidine intermediate in catalysis.

The protein belongs to the NDK family. As to quaternary structure, homotetramer. The cofactor is Mg(2+).

It localises to the cytoplasm. The enzyme catalyses a 2'-deoxyribonucleoside 5'-diphosphate + ATP = a 2'-deoxyribonucleoside 5'-triphosphate + ADP. The catalysed reaction is a ribonucleoside 5'-diphosphate + ATP = a ribonucleoside 5'-triphosphate + ADP. Functionally, major role in the synthesis of nucleoside triphosphates other than ATP. The ATP gamma phosphate is transferred to the NDP beta phosphate via a ping-pong mechanism, using a phosphorylated active-site intermediate. This is Nucleoside diphosphate kinase from Thermosynechococcus vestitus (strain NIES-2133 / IAM M-273 / BP-1).